The following is a 122-amino-acid chain: Sterile alpha motif domain-containing protein 13 (122 aa).

In terms of domain architecture, SAM spans 51–119; sequence WAVMDVVNYF…KPLQTKHLKN (69 aa).

The chain is Sterile alpha motif domain-containing protein 13 (SAMD13) from Homo sapiens (Human).